The sequence spans 421 residues: C2H2 type master regulator of conidiophore development brlA (421 aa).

2 C2H2-type zinc fingers span residues 309–333 and 339–364; these read FKCK…MKSH and HVCW…TKTH. Positions 379–421 are disordered; it reads ESSPDYDPDFRGQLTPDGLPIRGSTLDDPMPNSREYSVDGLDD.

The protein resides in the nucleus. BrlA, abaA and wetA are pivotal regulators of conidiophore development and conidium maturation. They act individually and together to regulate their own expression and that of numerous other sporulation-specific genes. Binds promoters of target genes at brlA response elements (BREs) containing the conserved sequence 5'-(C/A)(A/G)AGGG(G/A)-3'. Required for conidiophores formation. Controls expression of abaA. This is C2H2 type master regulator of conidiophore development brlA from Aspergillus oryzae (strain ATCC 42149 / RIB 40) (Yellow koji mold).